The chain runs to 170 residues: Probable chorismate pyruvate-lyase (170 aa).

3 residues coordinate substrate: arginine 77, leucine 114, and glutamate 157.

It belongs to the UbiC family.

Its subcellular location is the cytoplasm. It catalyses the reaction chorismate = 4-hydroxybenzoate + pyruvate. Its pathway is cofactor biosynthesis; ubiquinone biosynthesis. In terms of biological role, removes the pyruvyl group from chorismate, with concomitant aromatization of the ring, to provide 4-hydroxybenzoate (4HB) for the ubiquinone pathway. The chain is Probable chorismate pyruvate-lyase from Pasteurella multocida (strain Pm70).